The primary structure comprises 228 residues: Response regulator MprA (228 aa).

The Response regulatory domain occupies 2-116 (RILVVDDDRA…ELLARMRALL (115 aa)). Asp46 bears the 4-aspartylphosphate mark. Residues 127–225 (SVAMTFSDLT…VRGVGYVLRE (99 aa)) constitute a DNA-binding region (ompR/PhoB-type).

Phosphorylated and dephosphorylated by MprB.

It is found in the cytoplasm. Member of the two-component regulatory system MprB/MprA which contributes to maintaining a balance among several systems involved in stress resistance and is required for establishment and maintenance of persistent infection in the host. Functions as a transcriptional regulator that recognizes a 19-bp nucleotide motif comprizing two loosely conserved 8-bp direct DNA-binding motif repeats separated by a 3-bp spacer region. The sequence is that of Response regulator MprA (mprA) from Mycobacterium avium (strain 104).